A 209-amino-acid polypeptide reads, in one-letter code: Pyridoxine/pyridoxamine 5'-phosphate oxidase (209 aa).

Substrate is bound by residues 7–10 and K64; that span reads REDY. FMN-binding positions include 59-64, 74-75, R80, and K81; these read RIVLLK and FT. 3 residues coordinate substrate: Y121, R125, and S129. Residues 138 to 139 and W182 contribute to the FMN site; that span reads QS. Position 188-190 (188-190) interacts with substrate; the sequence is RLH. Residue R192 participates in FMN binding.

This sequence belongs to the pyridoxamine 5'-phosphate oxidase family. As to quaternary structure, homodimer. FMN serves as cofactor.

The catalysed reaction is pyridoxamine 5'-phosphate + O2 + H2O = pyridoxal 5'-phosphate + H2O2 + NH4(+). It catalyses the reaction pyridoxine 5'-phosphate + O2 = pyridoxal 5'-phosphate + H2O2. Its pathway is cofactor metabolism; pyridoxal 5'-phosphate salvage; pyridoxal 5'-phosphate from pyridoxamine 5'-phosphate: step 1/1. It participates in cofactor metabolism; pyridoxal 5'-phosphate salvage; pyridoxal 5'-phosphate from pyridoxine 5'-phosphate: step 1/1. Its function is as follows. Catalyzes the oxidation of either pyridoxine 5'-phosphate (PNP) or pyridoxamine 5'-phosphate (PMP) into pyridoxal 5'-phosphate (PLP). The polypeptide is Pyridoxine/pyridoxamine 5'-phosphate oxidase (Actinobacillus pleuropneumoniae serotype 3 (strain JL03)).